We begin with the raw amino-acid sequence, 394 residues long: Bifunctional enzyme IspD/IspF (394 aa).

The interval 1 to 230 (MADTLAIVVA…AEALLGGGPV (230 aa)) is 2-C-methyl-D-erythritol 4-phosphate cytidylyltransferase. The segment at 231-394 (LVGFGYDVHR…RIVLPGDRVL (164 aa)) is 2-C-methyl-D-erythritol 2,4-cyclodiphosphate synthase. D237 and H239 together coordinate a divalent metal cation. Residues 237-239 (DVH) and 263-264 (HS) each bind 4-CDP-2-C-methyl-D-erythritol 2-phosphate. H271 contacts a divalent metal cation. Residues 285-287 (DIG), 290-294 (FPDDD), 361-364 (TTTE), and F368 each bind 4-CDP-2-C-methyl-D-erythritol 2-phosphate.

This sequence in the N-terminal section; belongs to the IspD/TarI cytidylyltransferase family. IspD subfamily. It in the C-terminal section; belongs to the IspF family. It depends on a divalent metal cation as a cofactor.

It carries out the reaction 2-C-methyl-D-erythritol 4-phosphate + CTP + H(+) = 4-CDP-2-C-methyl-D-erythritol + diphosphate. The catalysed reaction is 4-CDP-2-C-methyl-D-erythritol 2-phosphate = 2-C-methyl-D-erythritol 2,4-cyclic diphosphate + CMP. It participates in isoprenoid biosynthesis; isopentenyl diphosphate biosynthesis via DXP pathway; isopentenyl diphosphate from 1-deoxy-D-xylulose 5-phosphate: step 2/6. It functions in the pathway isoprenoid biosynthesis; isopentenyl diphosphate biosynthesis via DXP pathway; isopentenyl diphosphate from 1-deoxy-D-xylulose 5-phosphate: step 4/6. In terms of biological role, bifunctional enzyme that catalyzes the formation of 4-diphosphocytidyl-2-C-methyl-D-erythritol from CTP and 2-C-methyl-D-erythritol 4-phosphate (MEP) (IspD), and catalyzes the conversion of 4-diphosphocytidyl-2-C-methyl-D-erythritol 2-phosphate (CDP-ME2P) to 2-C-methyl-D-erythritol 2,4-cyclodiphosphate (ME-CPP) with a corresponding release of cytidine 5-monophosphate (CMP) (IspF). The sequence is that of Bifunctional enzyme IspD/IspF from Desulforudis audaxviator (strain MP104C).